Here is a 480-residue protein sequence, read N- to C-terminus: Phenolic acid decarboxylase (480 aa).

Positions 163, 185, and 227 each coordinate Mn(2+). Prenylated FMN-binding positions include 163-168 (NVGTYR) and 184-185 (MH). The Proton donor role is filled by E278. The segment at 443 to 466 (TTPVPPEPNPRETQLLDPPDGTEE) is disordered.

This sequence belongs to the UbiD family. YclC subfamily. Homohexamer. Requires prenylated FMN as cofactor. It depends on Mn(2+) as a cofactor.

The catalysed reaction is 4-hydroxybenzoate + H(+) = phenol + CO2. The enzyme catalyses 3,4-dihydroxybenzoate + H(+) = catechol + CO2. Inhibited by Zn(2+), (2,3,4)-trihydroxybenzoate and (3,4,5)-trihydroxybenzoate. Ammonium and rubidium ions decrease the activity of the carboxylation of 3,4-dihydroxybenzoate by about 20%. Its function is as follows. Involved in the non-oxidative decarboxylation and detoxification of phenolic derivatives under anaerobic conditions. Oxygen-sensitive phenolic acid decarboxylase that catalyzes the reversible decarboxylation of 4-hydroxybenzoate and 3,4-dihydroxybenzoate. This Sedimentibacter hydroxybenzoicus (Clostridium hydroxybenzoicum) protein is Phenolic acid decarboxylase.